A 246-amino-acid chain; its full sequence is Submandibular gland secretory Glx-rich protein CA (246 aa).

Residues 1 to 18 (MLVVLLTAALLALSSAQG) form the signal peptide. The interval 14 to 223 (SSAQGTDEEV…SGRPKKPLLP (210 aa)) is disordered. Composition is skewed to low complexity over residues 39–50 (PVDSGSDPPSAD), 58–71 (EGESAAPANEEPPA), 81–93 (QQEPTQAENQEPP), 104–116 (QQEPTQAENQEPP), 127–141 (QQEPTQAEDQQPPAT), 150–159 (QQESTQAENQ), and 178–196 (VESPPSSPENSQEQPQQTN). Tandem repeats lie at residues 67 to 89 (EEPPATSGSEEEQQQQEPTQAEN), 90 to 112 (QEPPATSGSEEEQQQQEPTQAEN), 113 to 135 (QEPPATSGSEEEQQQQEPTQAED), 136 to 158 (QQPPATSGSEEEQQQQESTQAEN), and 159 to 181 (QEPSDSAGEGQETQPEEGNVESP). Residues 67–181 (EEPPATSGSE…QPEEGNVESP (115 aa)) are 5 X 23 AA tandem repeats. A compositionally biased stretch (basic and acidic residues) spans 197 to 216 (PEEKPPAPKTQEEPQHDSGR).

Submandibular gland acinar cells.

It is found in the secreted. Its function is as follows. GRP proteins have a marked affinity for hydroxyapatite. They may play a role in the formation of the protective acquired pellicle at the saliva-tooth interface. The protein is Submandibular gland secretory Glx-rich protein CA (Grpca) of Rattus norvegicus (Rat).